We begin with the raw amino-acid sequence, 115 residues long: Peptidyl-tRNA hydrolase (115 aa).

It belongs to the PTH2 family.

Its subcellular location is the cytoplasm. It carries out the reaction an N-acyl-L-alpha-aminoacyl-tRNA + H2O = an N-acyl-L-amino acid + a tRNA + H(+). The natural substrate for this enzyme may be peptidyl-tRNAs which drop off the ribosome during protein synthesis. The chain is Peptidyl-tRNA hydrolase from Methanosarcina acetivorans (strain ATCC 35395 / DSM 2834 / JCM 12185 / C2A).